Consider the following 349-residue polypeptide: Core protein VP7 (349 aa).

N-linked (GlcNAc...) asparagine; by host glycosylation occurs at Asn45.

Belongs to the orbivirus VP7 family. Homotrimer.

It is found in the virion. Major structural core protein; binds to structural protein VP3. Constitutes the surface of the AHSV core. In Camelus dromedarius (Dromedary), this protein is Core protein VP7 (Segment-7).